A 168-amino-acid chain; its full sequence is uncharacterized protein (168 aa).

CBS domains are found at residues Ile-20 to Leu-77 and Met-117 to Ile-168.

This is an uncharacterized protein from Methanocaldococcus jannaschii (strain ATCC 43067 / DSM 2661 / JAL-1 / JCM 10045 / NBRC 100440) (Methanococcus jannaschii).